The sequence spans 317 residues: Endochitinase 3 (317 aa).

A signal peptide spans 1–19 (MFVRNALVVTGLLAALTQA). N25, N49, and N169 each carry an N-linked (GlcNAc...) asparagine glycan. The region spanning 29-317 (HKLTVYWGAE…NYQKEIKANL (289 aa)) is the GH18 domain. The active-site Proton donor is E170. Residue N245 is glycosylated (N-linked (GlcNAc...) asparagine).

It belongs to the glycosyl hydrolase 18 family. Chitinase class III subfamily.

The protein localises to the secreted. It carries out the reaction Random endo-hydrolysis of N-acetyl-beta-D-glucosaminide (1-&gt;4)-beta-linkages in chitin and chitodextrins.. Secreted chitinase involved in the degradation of chitin, a component of the cell walls of fungi and exoskeletal elements of some animals (including worms and arthropods). Participates in the infection process and directly acts in the penetration process of the host cuticle. Involved in heat-shock adaptation. In Metarhizium robertsii (strain ARSEF 23 / ATCC MYA-3075) (Metarhizium anisopliae (strain ARSEF 23)), this protein is Endochitinase 3 (chi3).